The chain runs to 246 residues: Receptor-transporting protein 4 (246 aa).

Residues 1 to 224 (MVVDFWTWEQ…EKLGPSRDPD (224 aa)) lie on the Cytoplasmic side of the membrane. The segment at 48 to 159 (RAFGWFRCSS…DTANCEACTL (112 aa)) adopts a 3CxxC-type zinc-finger fold. Residues 225 to 245 (PLNICVFILLLVFIVVKCFTS) form a helical membrane-spanning segment.

The protein belongs to the TMEM7 family. In terms of assembly, interacts with TASR16. Interacts with OPRD1 and OPRM1; the interaction promotes cell surface localization of the OPDR1-OPRM1 heterodimer. (Microbial infection) Interacts with influenza A virus protein NS1; this interaction sequesters NS1 from interacting with RIG-I/DDX58 to restore antiviral signaling. As to expression, expressed in circumvallate papillae and testis.

It localises to the membrane. Its subcellular location is the cytoplasm. Functionally, chaperone protein that facilitates the trafficking and functional cell surface expression of some G-protein coupled receptors (GPCRs). Promotes functional expression of the bitter taste receptor TAS2R16. Also promotes functional expression of the opioid receptor heterodimer OPRD1-OPRM1. In addition, acts as a potent IFN-inducible suppressor of pathogens including lyssavirus rabies, influenza A or yellow fever virus. Mechanistically, associates with the viral replicase, binds viral RNA, and thereby suppresses viral genome amplification that replicates at the endoplasmic reticulum. In addition, restores antiviral signaling by interacting with and sequestering influenza A virus protein NS1. The sequence is that of Receptor-transporting protein 4 (RTP4) from Homo sapiens (Human).